Reading from the N-terminus, the 366-residue chain is 3-beta-hydroxysteroid dehydrogenase (366 aa).

Catalysis depends on Y154, which acts as the Proton donor.

It belongs to the 3-beta-HSD family.

The catalysed reaction is testosterone + NAD(+) = androst-4-ene-3,17-dione + NADH + H(+). The enzyme catalyses testosterone + NADP(+) = androst-4-ene-3,17-dione + NADPH + H(+). In terms of biological role, catalyzes the degradation of testosterone into androstenedione. This is 3-beta-hydroxysteroid dehydrogenase from Mycolicibacterium neoaurum (Mycobacterium neoaurum).